Here is a 507-residue protein sequence, read N- to C-terminus: Congo red hypersensitive protein 1 (507 aa).

Positions 1-22 (MKVLDLLTVLSASSLLSTFAAA) are cleaved as a signal peptide. The GH16 domain occupies 34 to 260 (ASSTASCNPL…KVIVTDYSTG (227 aa)). A disulfide bond links Cys40 and Cys48. Asn117 carries an N-linked (GlcNAc...) asparagine glycan. Glu134 functions as the Nucleophile in the catalytic mechanism. The Proton donor role is filled by Glu138. Glu138 contributes to the chitin binding site. N-linked (GlcNAc...) asparagine glycosylation is found at Asn177 and Asn201. Chitin contacts are provided by Trp219 and Thr230. 2 disordered regions span residues 329–368 (SSSA…SSKT) and 381–478 (SSFE…TNSV). 2 stretches are compositionally biased toward low complexity: residues 381-439 (SSFE…PVQD) and 451-477 (TSST…STNS). Residue Asn482 is the site of GPI-anchor amidated asparagine attachment. The propeptide at 483–507 (GADLAQSLPREGKLFSVLVALLALL) is removed in mature form.

It belongs to the glycosyl hydrolase 16 family. CRH1 subfamily. The GPI-anchor is attached to the protein in the endoplasmic reticulum and serves to target the protein to the cell surface. There, the glucosamine-inositol phospholipid moiety is cleaved off and the GPI-modified mannoprotein is covalently attached via its lipidless GPI glycan remnant to the 1,6-beta-glucan of the outer cell wall layer.

It is found in the secreted. Its subcellular location is the cell wall. The protein localises to the membrane. It carries out the reaction Random endo-hydrolysis of N-acetyl-beta-D-glucosaminide (1-&gt;4)-beta-linkages in chitin and chitodextrins.. Functionally, dual chitinase/transglycosylase that plays a role in cell wall architecture. Chitinase and transglycosylase activities are coupled. Required for the polysaccharide cross-linking at the septa and the cell wall. More specifically, transfers chitin to both beta(1-3)- and beta(1-6)glucan in the cell wall. The minimal number of intact hexopyranose units required in the molecule of the acceptor oligosaccharide is two and the effectivity of the acceptor increased with the increasing length of its oligosaccharide chain. The chain is Congo red hypersensitive protein 1 from Saccharomyces cerevisiae (strain ATCC 204508 / S288c) (Baker's yeast).